Reading from the N-terminus, the 2325-residue chain is Protein sidekick homolog (2325 aa).

The N-terminal stretch at 1–26 is a signal peptide; it reads MRNRLLLIFYTTTVLWTIGYTQLVLG. The Extracellular segment spans residues 27 to 2019; it reads KPPIFQDGGS…IPDDPFYTTW (1993 aa). Ig-like C2-type domains are found at residues 28-105, 217-319, and 324-397; these read PPIF…AAIS, PSLQ…AYMT, and PILK…ADLA. 3 disulfide bridges follow: cysteine 52/cysteine 94, cysteine 247/cysteine 301, and cysteine 345/cysteine 386. Asparagine 407 carries an N-linked (GlcNAc...) asparagine glycan. 2 consecutive Ig-like C2-type domains span residues 456-544 and 547-638; these read PSQK…VQVN and SLIE…AMLQ. 2 disulfide bridges follow: cysteine 480–cysteine 528 and cysteine 568–cysteine 622. 6 N-linked (GlcNAc...) asparagine glycosylation sites follow: asparagine 632, asparagine 655, asparagine 807, asparagine 868, asparagine 932, and asparagine 1016. Fibronectin type-III domains lie at 645–751, 756–853, 858–957, 961–1055, 1059–1154, 1159–1254, 1259–1359, 1363–1457, 1463–1566, 1571–1671, 1673–1775, 1776–1872, and 1873–2004; these read MPER…MPQQ, APRN…TSEG, APKN…TEED, SVDE…VPPE, RPSM…TLQT, PSQR…TYES, SPRN…TMED, PPES…SSVR, APAP…TLPS, QPIS…VGYS, PKRN…DKPG, PVGI…SKDG, and PPPP…TEQL. Residues 1036 to 1059 are disordered; it reads TRKGDGPVEETKFESGVPPELPGR. Over residues 1037–1048 the composition is skewed to basic and acidic residues; sequence RKGDGPVEETKF. N-linked (GlcNAc...) asparagine glycosylation occurs at asparagine 1107. The disordered stretch occupies residues 1137-1161; that stretch reads KGRGAPSEPSRSFETLQTNPDTPSQ. A compositionally biased stretch (polar residues) spans 1145 to 1161; sequence PSRSFETLQTNPDTPSQ. Asparagine 1614 carries N-linked (GlcNAc...) asparagine glycosylation. Disordered regions lie at residues 1857 to 1884 and 1918 to 1947; these read GEQR…ITSG and PANG…ATST. Asparagine 1863 is a glycosylation site (N-linked (GlcNAc...) asparagine). Positions 1935 to 1947 are enriched in low complexity; sequence AKSAAQTAAATST. A helical membrane pass occupies residues 2020 to 2040; the sequence is WFMALVAMGAFVLIVIIIAIL. The Cytoplasmic portion of the chain corresponds to 2041–2325; that stretch reads CVTGSSAKYR…NLTTGFSSFV (285 aa). Disordered stretches follow at residues 2080-2113, 2164-2187, 2202-2226, and 2285-2325; these read NMTR…SVLG, TAYV…PTRS, RGHI…LQQP, and ILTG…SSFV. Polar residues predominate over residues 2091 to 2100; that stretch reads PGTTQSWVSD. The span at 2215–2226 shows a compositional bias: low complexity; it reads GSQPQGSPLQQP. Composition is skewed to polar residues over residues 2294-2305 and 2313-2325; these read AGRSSTTDSTSE and ATPN…SSFV.

This sequence belongs to the sidekick family.

It localises to the membrane. Cell adhesion protein. The chain is Protein sidekick homolog (rig-4) from Caenorhabditis elegans.